We begin with the raw amino-acid sequence, 120 residues long: Late cornified envelope-like proline-rich protein 1 (120 aa).

The protein belongs to the cornifin (SPRR) family.

In Mus musculus (Mouse), this protein is Late cornified envelope-like proline-rich protein 1 (Lelp1).